A 994-amino-acid polypeptide reads, in one-letter code: cGMP-dependent protein kinase (994 aa).

A disordered region spans residues 1–162 (MGACISKNSS…QDDSHTEEEK (162 aa)). Glycine 2 carries the N-myristoyl glycine lipid modification. Cysteine 4 carries the S-palmitoyl cysteine lipid modification. 2 stretches are compositionally biased toward low complexity: residues 9-22 (SSAR…LSAS) and 33-46 (GAAG…GAAE). Composition is skewed to basic and acidic residues over residues 65–80 (ELER…REEP) and 133–162 (EGPK…EEEK). 4 cNMP-binding domain regions span residues 189-305 (VCSS…FLAS), 308-407 (FFEM…RVLG), 463-539 (GIRF…ATLG), and 561-660 (IFRY…NEII). 3',5'-cyclic GMP contacts are provided by glycine 253, glutamate 254, alanine 256, arginine 263, and serine 264. The 3',5'-cyclic GMP site is built by arginine 616, glycine 625, glutamate 626, alanine 628, arginine 635, and threonine 636. In terms of domain architecture, Protein kinase spans 684-941 (LQVVRVVGRG…YKDIKEHAFF (258 aa)). ATP-binding positions include 690–698 (VGRGTFGTV) and lysine 713. Aspartate 807 serves as the catalytic Proton acceptor. The AGC-kinase C-terminal domain occupies 942–994 (GDFDWDKLAGRGLPPPLAPKGETYAEDTEQSSFELDEDDTIVLEDEYDWDKDF). The interval 954-976 (LPPPLAPKGETYAEDTEQSSFEL) is disordered. Over residues 965–976 (YAEDTEQSSFEL) the composition is skewed to acidic residues.

The protein belongs to the protein kinase superfamily. AGC Ser/Thr protein kinase family. cGMP subfamily. It depends on Mg(2+) as a cofactor.

It localises to the cytoplasm. The protein localises to the membrane. Its subcellular location is the cell membrane. It catalyses the reaction L-seryl-[protein] + ATP = O-phospho-L-seryl-[protein] + ADP + H(+). It carries out the reaction L-threonyl-[protein] + ATP = O-phospho-L-threonyl-[protein] + ADP + H(+). Its activity is regulated as follows. Activated by cGMP. The cGMP-binding domains acts cooperatively to activate PKG. Inhibited by the antiparasitic small molecule 4-[2-(4-fluorophenyl)-5-(1-methylpiperidine-4-yl)-1Hpyrrol- 3-yl]pyridine (compound 1). Its function is as follows. Serine/threonine protein kinase which acts as a downstream effector of the second messenger cGMP. Plays an essential role in tachyzoite invasion of and egress from host cells. During invasion of host cells, regulates the apico-basal flux of F-actin probably via Ca(2+)-mediated activation of CDPK1. In tachyzoites, required for microneme secretion. Required for tachyzoite gliding motility. Functionally, plays an essential role in parasite invasion of and egress from host cells, and microneme secretion. In terms of biological role, dispensable for parasite invasion of and egress from host cells, and microneme secretion. This is cGMP-dependent protein kinase from Toxoplasma gondii.